The primary structure comprises 43 residues: Protein PsbN (43 aa).

Residues 5 to 27 form a helical membrane-spanning segment; sequence TVLSIFISSLLLGITGYSIYTAF.

Belongs to the PsbN family.

The protein localises to the plastid. The protein resides in the chloroplast thylakoid membrane. May play a role in photosystem I and II biogenesis. The protein is Protein PsbN of Porphyra purpurea (Red seaweed).